A 557-amino-acid polypeptide reads, in one-letter code: Potassium-transporting ATPase potassium-binding subunit (557 aa).

The next 12 membrane-spanning stretches (helical) occupy residues 5-25 (GFLLIATFLLVLMVLARPLGS), 63-83 (LSAILGLNILGLAVLFFMLLG), 132-152 (GLTVQNFLSAASGIAVIFALI), 170-190 (LLRITLWVLTPVALLIALFFI), 253-273 (FVQMLAIFLIPTALCFAFGEV), 283-303 (LLWAMSVIFVICVGVVMWAEV), 329-349 (VLVSSLFAVVTTAASCGAVIA), 356-376 (ALGGMVPMWLMQIGEVVFGGV), 379-399 (GLYGMMLFVLLAVFIAGLMIG), 416-436 (LTALAILVTPTLVLMGAALAM), 484-504 (LLALCMFVGRFGVIIPVMAIA), and 526-546 (LFVGLLIGTVLLVGALTFIPA).

Belongs to the KdpA family. In terms of assembly, the system is composed of three essential subunits: KdpA, KdpB and KdpC.

Its subcellular location is the cell inner membrane. Functionally, part of the high-affinity ATP-driven potassium transport (or Kdp) system, which catalyzes the hydrolysis of ATP coupled with the electrogenic transport of potassium into the cytoplasm. This subunit binds the periplasmic potassium ions and delivers the ions to the membrane domain of KdpB through an intramembrane tunnel. In Escherichia coli O127:H6 (strain E2348/69 / EPEC), this protein is Potassium-transporting ATPase potassium-binding subunit.